A 354-amino-acid chain; its full sequence is S-adenosylmethionine:tRNA ribosyltransferase-isomerase (354 aa).

The protein belongs to the QueA family. In terms of assembly, monomer.

It is found in the cytoplasm. It catalyses the reaction 7-aminomethyl-7-carbaguanosine(34) in tRNA + S-adenosyl-L-methionine = epoxyqueuosine(34) in tRNA + adenine + L-methionine + 2 H(+). It functions in the pathway tRNA modification; tRNA-queuosine biosynthesis. Functionally, transfers and isomerizes the ribose moiety from AdoMet to the 7-aminomethyl group of 7-deazaguanine (preQ1-tRNA) to give epoxyqueuosine (oQ-tRNA). The polypeptide is S-adenosylmethionine:tRNA ribosyltransferase-isomerase (Pseudomonas syringae pv. tomato (strain ATCC BAA-871 / DC3000)).